The following is a 540-amino-acid chain: Chaperonin GroEL (540 aa).

ATP is bound by residues 29–32 (TLGP), 86–90 (DGTTT), Gly-413, 478–480 (DAL), and Asp-494.

This sequence belongs to the chaperonin (HSP60) family. In terms of assembly, forms a cylinder of 14 subunits composed of two heptameric rings stacked back-to-back. Interacts with the co-chaperonin GroES.

It is found in the cytoplasm. The enzyme catalyses ATP + H2O + a folded polypeptide = ADP + phosphate + an unfolded polypeptide.. Functionally, together with its co-chaperonin GroES, plays an essential role in assisting protein folding. The GroEL-GroES system forms a nano-cage that allows encapsulation of the non-native substrate proteins and provides a physical environment optimized to promote and accelerate protein folding. The protein is Chaperonin GroEL of Clostridioides difficile (Peptoclostridium difficile).